A 466-amino-acid polypeptide reads, in one-letter code: Soluble pyridine nucleotide transhydrogenase (466 aa).

An FAD-binding site is contributed by glutamate 36–cysteine 45.

Belongs to the class-I pyridine nucleotide-disulfide oxidoreductase family. FAD is required as a cofactor.

Its subcellular location is the cytoplasm. It carries out the reaction NAD(+) + NADPH = NADH + NADP(+). Conversion of NADPH, generated by peripheral catabolic pathways, to NADH, which can enter the respiratory chain for energy generation. This chain is Soluble pyridine nucleotide transhydrogenase, found in Colwellia psychrerythraea (strain 34H / ATCC BAA-681) (Vibrio psychroerythus).